A 397-amino-acid chain; its full sequence is Arginine biosynthesis bifunctional protein ArgJ (397 aa).

Substrate-binding residues include Thr147, Lys173, Thr184, Glu270, Asn392, and Thr397. Thr184 serves as the catalytic Nucleophile.

It belongs to the ArgJ family. As to quaternary structure, heterotetramer of two alpha and two beta chains.

Its subcellular location is the cytoplasm. The catalysed reaction is N(2)-acetyl-L-ornithine + L-glutamate = N-acetyl-L-glutamate + L-ornithine. It catalyses the reaction L-glutamate + acetyl-CoA = N-acetyl-L-glutamate + CoA + H(+). It functions in the pathway amino-acid biosynthesis; L-arginine biosynthesis; L-ornithine and N-acetyl-L-glutamate from L-glutamate and N(2)-acetyl-L-ornithine (cyclic): step 1/1. Its pathway is amino-acid biosynthesis; L-arginine biosynthesis; N(2)-acetyl-L-ornithine from L-glutamate: step 1/4. Catalyzes two activities which are involved in the cyclic version of arginine biosynthesis: the synthesis of N-acetylglutamate from glutamate and acetyl-CoA as the acetyl donor, and of ornithine by transacetylation between N(2)-acetylornithine and glutamate. In Streptococcus thermophilus (strain ATCC BAA-250 / LMG 18311), this protein is Arginine biosynthesis bifunctional protein ArgJ.